Consider the following 459-residue polypeptide: MLDFMEYIQLGFAEATNWNRDNSYSSLTATAQSLLDFKTPERLRVHLSSLSTPHFATSYTLGTVGLIDGSVSYLYSTVPFDHTPSRSALIPLRKLAPGYRQVQPPVAPIENWGWDSTLNHETTPLAQKATLLHATMHMPPPTTLNALFLRRISPTMQLTLAVCSTRGPPLSKSAPQASLLTQLSHDTGKYSNEYLFSTDNALFGWRGLWNFGPDPRNPADDAAPRLSLLSAGAEAYYSPVSSLVGMSTGLRFSTLPAATDASSAPSSSSSPSSATPTQISTFPYTLTLTLTPMTGSLSTTYSLRASPNLSFSSRFGFNVYSWESEMVAGCELWRQSRKRVPAEEEDDGLEWARRKLRMMDDAAVPLPPTSSVPAEPEQDETTESVLKIRVDQSWNVRLLWEGRVKELLVSAGVGLGPSSFSSSAWTNSTAGGAGGQASGGGNAGTSYWRGVGVSVSYSS.

This sequence belongs to the MDM10 family. In terms of assembly, component of the ER-mitochondria encounter structure (ERMES) or MDM complex, composed of mmm1, mdm10, mdm12 and mdm34. Associates with the mitochondrial outer membrane sorting assembly machinery SAM(core) complex.

The protein localises to the mitochondrion outer membrane. Its function is as follows. Component of the ERMES/MDM complex, which serves as a molecular tether to connect the endoplasmic reticulum and mitochondria. Components of this complex are involved in the control of mitochondrial shape and protein biogenesis and may function in phospholipid exchange. mdm10 is involved in the late assembly steps of the general translocase of the mitochondrial outer membrane (TOM complex). Functions in the tom40-specific route of the assembly of outer membrane beta-barrel proteins, including the association of tom40 with the receptor tom22 and small TOM proteins. Can associate with the SAM(core) complex as well as the mdm12-mmm1 complex, both involved in late steps of the major beta-barrel assembly pathway, that is responsible for biogenesis of all outer membrane beta-barrel proteins. May act as a switch that shuttles between both complexes and channels precursor proteins into the tom40-specific pathway. Plays a role in mitochondrial morphology and in the inheritance of mitochondria. The polypeptide is Mitochondrial distribution and morphology protein 10 (mdmB) (Aspergillus terreus (strain NIH 2624 / FGSC A1156)).